A 599-amino-acid polypeptide reads, in one-letter code: Elongation factor 4 (599 aa).

Residues 2-185 enclose the tr-type G domain; that stretch reads KYIRNFSIIA…RIIIDIPVPQ (184 aa). Residues 14 to 19 and 132 to 135 each bind GTP; these read NHGKST and NKID.

It belongs to the TRAFAC class translation factor GTPase superfamily. Classic translation factor GTPase family. LepA subfamily.

The protein resides in the cell inner membrane. It catalyses the reaction GTP + H2O = GDP + phosphate + H(+). In terms of biological role, required for accurate and efficient protein synthesis under certain stress conditions. May act as a fidelity factor of the translation reaction, by catalyzing a one-codon backward translocation of tRNAs on improperly translocated ribosomes. Back-translocation proceeds from a post-translocation (POST) complex to a pre-translocation (PRE) complex, thus giving elongation factor G a second chance to translocate the tRNAs correctly. Binds to ribosomes in a GTP-dependent manner. In Blochmanniella floridana, this protein is Elongation factor 4.